A 433-amino-acid chain; its full sequence is Putative zinc metalloprotease BB_0118 (433 aa).

H17 contacts Zn(2+). Residue E18 is part of the active site. H21 is a binding site for Zn(2+). Residues 98 to 120 (ILIYFAGPLFNLIFSFIVFIFIS) form a helical membrane-spanning segment. Residues 193–265 (TVSLQDFLKE…VVEIKFSRNG (73 aa)) form the PDZ domain. 3 helical membrane passes run 334 to 356 (VSGPVGIVGILSSSYSLGILYWI), 366 to 388 (LAGMNLFFIVIPIFDGGQIFISF), and 401 to 423 (TIYSFYSFGIFFGLFLFGLGLFN).

Belongs to the peptidase M50B family. Zn(2+) serves as cofactor.

Its subcellular location is the cell inner membrane. This chain is Putative zinc metalloprotease BB_0118, found in Borreliella burgdorferi (strain ATCC 35210 / DSM 4680 / CIP 102532 / B31) (Borrelia burgdorferi).